The chain runs to 203 residues: UPF0637 protein SH1846 (203 aa).

Belongs to the UPF0637 family.

This is UPF0637 protein SH1846 from Staphylococcus haemolyticus (strain JCSC1435).